Here is a 157-residue protein sequence, read N- to C-terminus: Class-10 pathogenesis-related protein 1 (157 aa).

The protein belongs to the BetVI family. In terms of tissue distribution, high levels in roots and not detectable in hypocotyls, cotyledons, stems, leaves and flower buds of untreated plants. After induction, high levels are present in the vascular bundles of leaves.

The protein localises to the cytoplasm. The protein is Class-10 pathogenesis-related protein 1 (MSPR10-1) of Medicago sativa (Alfalfa).